A 938-amino-acid polypeptide reads, in one-letter code: Auxilin (938 aa).

The tract at residues 19 to 41 is disordered; sequence AAAGENRMKDSENKGASSPDMEP. A run of 3 repeats spans residues 61–64, 65–68, and 69–72. The 3 X 4 AA approximate tandem repeats stretch occupies residues 61–72; it reads NLKDNLKDTLKD. Residues 80–247 form the Phosphatase tensin-type domain; the sequence is SVSSYTKGDL…GYMCDLLADK (168 aa). A Phosphoserine modification is found at Ser137. Cys189 acts as the Phosphocysteine intermediate in catalysis. The C2 tensin-type domain occupies 253-391; the sequence is FKPLTIKAIT…FQVTLDIEVQ (139 aa). The short motif at 434 to 442 is the SH3-binding element; sequence PADLPPDHP. Residues 467–801 are disordered; the sequence is EEDHAALVNQ…GKGSTNLEGK (335 aa). Ser478 and Ser481 each carry phosphoserine. Positions 531 to 548 are enriched in polar residues; that stretch reads DVSTNFSSLAAPPSNSEL. Over residues 559 to 569 the composition is skewed to low complexity; sequence TGPAQAGQAGV. 2 stretches are compositionally biased toward polar residues: residues 579 to 596 and 624 to 654; these read VSAQ…SASP and FLNT…TPAV. Position 595 is a phosphoserine (Ser595). The segment covering 679-694 has biased composition (low complexity); that stretch reads SAATSPTGSSHGTPTH. A compositionally biased stretch (polar residues) spans 754-781; it reads NWQQTQSKPQSSMPHSSPQNRPNYNVSF. The J domain occupies 874–938; that stretch reads TKWKPVGMAD…FENQGQKPLY (65 aa).

In terms of assembly, forms a complex composed of HSPA8, CLTC and DNAJC6. Interacts with HSPA8/HSC70 in an ATP-dependent manner; this interaction stimulates the HSPA8's ATPase activity. Interacts with CLTC; this interaction produces a local change in heavy-chain contacts, creating a detectable global distortion of the clathrin coat. Interacts with AP2A2. Interacts with DNM1(GTP-bound form); this interaction allows clathrin-coated vesicle (CCV) formation at the plasma membrane. The N-terminus is blocked. Post-translationally, phosphorylation at Ser-595 modulates its ability to bind CLTC and therefore the synaptic vesicle endocytosis (SVE).

The protein resides in the cytoplasmic vesicle. It is found in the clathrin-coated vesicle. Functionally, may act as a protein phosphatase and/or a lipid phosphatase. Co-chaperone that recruits HSPA8/HSC70 to clathrin-coated vesicles (CCVs) and promotes the ATP-dependent dissociation of clathrin from CCVs and participates in clathrin-mediated endocytosis of synaptic vesicles and their recycling and also in intracellular trafficking. Firstly, binds tightly to the clathrin cages, at a ratio of one DNAJC6 per clathrin triskelion. The HSPA8:ATP complex then binds to the clathrin-auxilin cage, initially at a ratio of one HSPA8 per triskelion leading to ATP hydrolysis stimulation and causing a conformational change in the HSPA8. This cycle is repeated three times to drive to a complex containing the clathrin-auxilin cage associated to three HSPA8:ADP complex. The ATP hydrolysis of the third HSPA8:ATP complex leads to a concerted dismantling of the cage into component triskelia. Then, dissociates from the released triskelia and be recycled to initiate another cycle of HSPA8's recruitment. Also acts during the early steps of clathrin-coated vesicle (CCV) formation through its interaction with the GTP bound form of DNM1. In Mus musculus (Mouse), this protein is Auxilin.